A 239-amino-acid chain; its full sequence is RNA polymerase sigma factor FliA (239 aa).

The sigma-70 factor domain-2 stretch occupies residues 16–88 (LWQRYVPLVR…MLDELRSRDW (73 aa)). Residues 43-46 (DLLQ) carry the Interaction with polymerase core subunit RpoC motif. Residues 96–166 (NAREVAQAIG…IELVTDDHQR (71 aa)) form a sigma-70 factor domain-3 region. The segment at 185–233 (AIETLPEREKLVLTLYYQEELNLKEIGAVLEVGESRVSQLHSQAIKRLR) is sigma-70 factor domain-4. Positions 207-226 (LKEIGAVLEVGESRVSQLHS) form a DNA-binding region, H-T-H motif.

This sequence belongs to the sigma-70 factor family. FliA subfamily.

The protein localises to the cytoplasm. Its function is as follows. Sigma factors are initiation factors that promote the attachment of RNA polymerase to specific initiation sites and are then released. This sigma factor controls the expression of flagella-related genes. This chain is RNA polymerase sigma factor FliA, found in Escherichia coli O157:H7.